A 352-amino-acid chain; its full sequence is Transcriptional regulatory protein AlgP (352 aa).

Residues 128 to 352 (KALESRKAKP…SNGAAPTSAS (225 aa)) are disordered. The segment covering 138–341 (ATKPAAKAAA…SSAASATPAA (204 aa)) has biased composition (low complexity).

The promoter for a critical alginate biosynthetic gene, AlgD, encoding GDP-mannose dehydrogenase, is activated only under conditions reminiscent of the cystic fibrosis lung (i.e. under high osmolarity), and at least two regulatory genes, AlgP and AlgQ, have been implicated in this activation process. The protein is Transcriptional regulatory protein AlgP (algP) of Pseudomonas aeruginosa (strain ATCC 15692 / DSM 22644 / CIP 104116 / JCM 14847 / LMG 12228 / 1C / PRS 101 / PAO1).